The sequence spans 266 residues: Hydroxyethylthiazole kinase (266 aa).

Met-45 serves as a coordination point for substrate. ATP contacts are provided by Arg-120 and Thr-165. Residue Ala-192 coordinates substrate.

This sequence belongs to the Thz kinase family. It depends on Mg(2+) as a cofactor.

It carries out the reaction 5-(2-hydroxyethyl)-4-methylthiazole + ATP = 4-methyl-5-(2-phosphooxyethyl)-thiazole + ADP + H(+). The protein operates within cofactor biosynthesis; thiamine diphosphate biosynthesis; 4-methyl-5-(2-phosphoethyl)-thiazole from 5-(2-hydroxyethyl)-4-methylthiazole: step 1/1. Functionally, catalyzes the phosphorylation of the hydroxyl group of 4-methyl-5-beta-hydroxyethylthiazole (THZ). This is Hydroxyethylthiazole kinase from Psychrobacter sp. (strain PRwf-1).